A 510-amino-acid chain; its full sequence is ATP synthase subunit alpha (510 aa).

169–176 (GDRQTGKT) is an ATP binding site.

Belongs to the ATPase alpha/beta chains family. F-type ATPases have 2 components, CF(1) - the catalytic core - and CF(0) - the membrane proton channel. CF(1) has five subunits: alpha(3), beta(3), gamma(1), delta(1), epsilon(1). CF(0) has three main subunits: a(1), b(2) and c(9-12). The alpha and beta chains form an alternating ring which encloses part of the gamma chain. CF(1) is attached to CF(0) by a central stalk formed by the gamma and epsilon chains, while a peripheral stalk is formed by the delta and b chains.

It is found in the cell membrane. The enzyme catalyses ATP + H2O + 4 H(+)(in) = ADP + phosphate + 5 H(+)(out). Its function is as follows. Produces ATP from ADP in the presence of a proton gradient across the membrane. The alpha chain is a regulatory subunit. The protein is ATP synthase subunit alpha of Thermomicrobium roseum (strain ATCC 27502 / DSM 5159 / P-2).